We begin with the raw amino-acid sequence, 222 residues long: Iodotyrosine deiodinase (222 aa).

FMN-binding positions include 34 to 38 (RRTVR) and 61 to 62 (PS). Residues glutamate 91, tyrosine 95, and lysine 116 each contribute to the 3-iodo-L-tyrosine site. Residues 171–173 (THT) and arginine 212 contribute to the FMN site.

This sequence belongs to the nitroreductase family. In terms of assembly, homodimer. FMN serves as cofactor.

The catalysed reaction is 2 iodide + L-tyrosine + 2 NADP(+) = 3,5-diiodo-L-tyrosine + 2 NADPH + H(+). It carries out the reaction iodide + L-tyrosine + NADP(+) = 3-iodo-L-tyrosine + NADPH. It catalyses the reaction 3-iodo-L-tyrosine + iodide + NADP(+) = 3,5-diiodo-L-tyrosine + NADPH + H(+). The enzyme catalyses L-tyrosine + chloride + NADP(+) = 3-chloro-L-tyrosine + NADPH. The catalysed reaction is bromide + L-tyrosine + NADP(+) = 3-bromo-L-tyrosine + NADPH. Catalyzes the dehalogenation of halotyrosines such as 3-iodo-L-tyrosine and 3,5-diiodo-L-tyrosine. Likely to also catalyze the dehalogenation of other halotyrosines such as 3-bromo-L-tyrosine, 3-chloro-L-tyrosine and 3-iodo-L-tyrosine. Activity towards 3-iodo-L-tyrosine is much stronger than activity towards 3,5-diiodo-L-tyrosine and 2-iodophenol. The sequence is that of Iodotyrosine deiodinase from Haliscomenobacter hydrossis (strain ATCC 27775 / DSM 1100 / LMG 10767 / O).